The following is an 84-amino-acid chain: Small ribosomal subunit protein bS20 (84 aa).

A disordered region spans residues 1–25; the sequence is MANIVSNEKTYRHTQKVRKENHAKM.

The protein belongs to the bacterial ribosomal protein bS20 family.

Functionally, binds directly to 16S ribosomal RNA. The chain is Small ribosomal subunit protein bS20 from Ureaplasma parvum serovar 3 (strain ATCC 700970).